Here is a 318-residue protein sequence, read N- to C-terminus: Epithelial-stromal interaction protein 1 (318 aa).

The tract at residues 1–60 (MNTRNRVVNSGLGASPASRPTRDPQDPSGRQGELSPVEDQREGLEAAPKGPSRESVVHAG) is disordered. Coiled coils occupy residues 73–188 (NINR…HQQY) and 240–280 (LKAE…HQTE).

As to expression, highly expressed in placenta, small intestine, spleen, kidney, thymus, liver, salivary gland and testes. Weakly expressed in breast, skeletal muscle and colon. Highly expressed in breast cancer upon interaction between tumor cells and stromal cells in vitro. Expressed in blood mononuclear cells from patients with systemic lupus erythematosus (SLE).

In terms of biological role, plays a role in M1 macrophage polarization and is required for the proper regulation of gene expression during M1 versus M2 macrophage differentiation. Might play a role in RELA/p65 and STAT1 phosphorylation and nuclear localization upon activation of macrophages. The chain is Epithelial-stromal interaction protein 1 (EPSTI1) from Homo sapiens (Human).